Consider the following 303-residue polypeptide: MLSQINAFLEANQTINVKTNEPLSKYTFTKTGGPADLLALPTSVPEVRQLLVAAKQNQLPITVIGNASNLIVRDDGISGLVIILTAMDQIDVQGTTVVAQAGAGIIQTSEAAYSGSLTGLEFAAGIPGSVGGAVFMNAGAYGGEISDVLTSAEILTQDNEIETLTNDELNFSYRHSLIQENGSIVLSARFEMAKGVAPTIREKMDELNALRAAKQPLEYPSCGSVFKRPVGHFVGPLIQKAGLQGHQIGGAQVSEKHAGFIVNRGGATATDYLTLIAYIQETIWHKFEVRLEPEVRIIGKKSE.

In terms of domain architecture, FAD-binding PCMH-type spans 30-195 (KTGGPADLLA…LSARFEMAKG (166 aa)). Arginine 174 is an active-site residue. Serine 224 acts as the Proton donor in catalysis. Residue glutamate 294 is part of the active site.

It belongs to the MurB family. The cofactor is FAD.

The protein resides in the cytoplasm. The enzyme catalyses UDP-N-acetyl-alpha-D-muramate + NADP(+) = UDP-N-acetyl-3-O-(1-carboxyvinyl)-alpha-D-glucosamine + NADPH + H(+). It functions in the pathway cell wall biogenesis; peptidoglycan biosynthesis. In terms of biological role, cell wall formation. The sequence is that of UDP-N-acetylenolpyruvoylglucosamine reductase from Latilactobacillus sakei subsp. sakei (strain 23K) (Lactobacillus sakei subsp. sakei).